Here is a 495-residue protein sequence, read N- to C-terminus: MKSPVSDLAPSDGEEGSDRTPLLQRAPRAEPAPVCCSARYNLAFLSFFGFFVLYSLRVNLSVALVDMVDSNTTAKDNRTSYECAEHSAPIKVLHNQTGKKYRWDAETQGWILGSFFYGYIITQIPGGYVASRSGGKLLLGFGIFATAIFTLFTPLAADFGVGALVALRALEGLGEGVTYPAMHAMWSSWAPPLERSKLLSISYAGAQLGTVVSLPLSGVICYYMNWTYVFYFFGIVGIIWFILWICLVSDTPETHKTITPYEKEYILSSLKNQLSSQKSVPWIPMLKSLPLWAIVVAHFSYNWTFYTLLTLLPTYMKEVLRFNIQENGFLSAVPYLGCWLCMILSGQAADNLRARWNFSTLWVRRVFSLIGMIGPAIFLVAAGFIGCDYSLAVAFLTISTTLGGFCSSGFSINHLDIAPSYAGILLGITNTFATIPGMIGPIIARSLTPENTIGEWQTVFCIAAAINVFGAIFFTLFAKGEVQNWAISDHQGHRN.

The interval 1 to 24 (MKSPVSDLAPSDGEEGSDRTPLLQ) is disordered. Residue Ser-3 is modified to Phosphoserine. A Dileucine internalization motif motif is present at residues 22–23 (LL). The helical transmembrane segment at 42 to 62 (LAFLSFFGFFVLYSLRVNLSV) threads the bilayer. N-linked (GlcNAc...) asparagine glycosylation is found at Asn-71, Asn-77, and Asn-95. The next 11 membrane-spanning stretches (helical) occupy residues 110 to 130 (WILGSFFYGYIITQIPGGYVA), 137 to 157 (LLLGFGIFATAIFTLFTPLAA), 159 to 179 (FGVGALVALRALEGLGEGVTY), 201 to 221 (ISYAGAQLGTVVSLPLSGVIC), 228 to 248 (YVFYFFGIVGIIWFILWICLV), 289 to 309 (LPLWAIVVAHFSYNWTFYTLL), 329 to 349 (FLSAVPYLGCWLCMILSGQAA), 366 to 386 (VFSLIGMIGPAIFLVAAGFIG), 392 to 412 (AVAFLTISTTLGGFCSSGFSI), 424 to 444 (ILLGITNTFATIPGMIGPIIA), and 458 to 478 (TVFCIAAAINVFGAIFFTLFA).

Belongs to the major facilitator superfamily. Sodium/anion cotransporter family. As to expression, significantly expressed in lung endothelial cells, and much less in liver.

The protein resides in the basolateral cell membrane. It localises to the cytoplasmic vesicle. Its subcellular location is the secretory vesicle. The protein localises to the synaptic vesicle membrane. It is found in the lysosome membrane. It catalyses the reaction N-acetylneuraminate(in) + H(+)(in) = N-acetylneuraminate(out) + H(+)(out). It carries out the reaction D-glucuronate(out) + H(+)(out) = D-glucuronate(in) + H(+)(in). The enzyme catalyses 2 nitrate(out) + H(+)(out) = 2 nitrate(in) + H(+)(in). The catalysed reaction is L-aspartate(out) = L-aspartate(in). It catalyses the reaction L-glutamate(out) = L-glutamate(in). It carries out the reaction N-acetyl-L-aspartyl-L-glutamate(out) = N-acetyl-L-aspartyl-L-glutamate(in). Its function is as follows. Multifunctional anion transporter that operates via two distinct transport mechanisms, namely proton-coupled anion cotransport and membrane potential-dependent anion transport. Electroneutral proton-coupled acidic monosaccharide symporter, with a sugar to proton stoichiometry of 1:1. Exports glucuronic acid and free sialic acid derived from sialoglycoconjugate degradation out of lysosomes, driven by outwardly directed lysosomal pH gradient. May regulate lysosome function and metabolism of sialylated conjugates that impact oligodendrocyte lineage differentiation and myelinogenesis in the central nervous system. Electrogenic proton-coupled nitrate symporter that transports nitrate ions across the basolateral membrane of salivary gland acinar cells, with nitrate to proton stoichiometry of 2:1. May contribute to nitrate clearance from serum by salivary glands, where it is further concentrated and secreted in the saliva. Uses membrane potential to drive the uptake of acidic amino acids and peptides into synaptic vesicles. Responsible for synaptic vesicular storage of L-aspartate and L-glutamate in pinealocytes as well as vesicular uptake of N-acetyl-L-aspartyl-L-glutamate neuropeptide, relevant to aspartegic-associated glutamatergic neurotransmission and activation of metabotropic receptors that inhibit subsequent transmitter release. In terms of biological role, receptor for CM101, a polysaccharide produced by group B Streptococcus with antipathoangiogenic properties. This chain is Sialin (SLC17A5), found in Ovis aries (Sheep).